A 616-amino-acid chain; its full sequence is Hemagglutinin-neuraminidase (616 aa).

Topologically, residues 1-26 (MDRAVSQVALENDEREAKNTWRLVFR) are intravirion. The helical transmembrane segment at 27 to 47 (IAILLLTVVTLAISAAALAYS) threads the bilayer. Topologically, residues 48-616 (MEASTPSDLI…ELESYAASWP (569 aa)) are virion surface. Asn-119 carries N-linked (GlcNAc...) asparagine; by host glycosylation. The segment at 124 to 152 (GAPIHDPDYIGGIGKELIVDDASDVTSFY) is important for interaction with fusion/F protein. 3 cysteine pairs are disulfide-bonded: Cys-172/Cys-196, Cys-186/Cys-247, and Cys-238/Cys-251. Positions 234 to 239 (NRKSCS) are involved in neuraminidase activity. N-linked (GlcNAc...) asparagine; by host glycosylation is found at Asn-341 and Asn-433. 2 disulfide bridges follow: Cys-344-Cys-461 and Cys-455-Cys-465. Residues Asn-481, Asn-538, and Asn-600 are each glycosylated (N-linked (GlcNAc...) asparagine; by host). A disulfide bond links Cys-531 and Cys-542.

Belongs to the paramyxoviruses hemagglutinin-neuraminidase family. As to quaternary structure, homotetramer; composed of disulfide-linked homodimers. Interacts with F protein trimer. Interacts with host CG-1B; this interaction inhibits viral adsorption and replication rather than internalization.

The protein resides in the virion membrane. The protein localises to the host cell membrane. It catalyses the reaction Hydrolysis of alpha-(2-&gt;3)-, alpha-(2-&gt;6)-, alpha-(2-&gt;8)- glycosidic linkages of terminal sialic acid residues in oligosaccharides, glycoproteins, glycolipids, colominic acid and synthetic substrates.. Functionally, mediates the viral entry into the host cell together with fusion/F protein. Attaches the virus to sialic acid-containing cell receptors and thereby initiates infection. Binding of HN protein to the receptor induces a conformational change that allows the F protein to trigger virion/cell membranes fusion. In terms of biological role, neuraminidase activity ensures the efficient spread of the virus by dissociating the mature virions from the neuraminic acid containing glycoproteins. The sequence is that of Hemagglutinin-neuraminidase (HN) from Newcastle disease virus (strain Chicken/Northern Ireland/Ulster/67) (NDV).